A 173-amino-acid chain; its full sequence is uncharacterized protein (173 aa).

This is an uncharacterized protein from Haemophilus influenzae (strain ATCC 51907 / DSM 11121 / KW20 / Rd).